The following is a 636-amino-acid chain: Translation factor GUF1 homolog, chloroplastic (636 aa).

In terms of domain architecture, tr-type G spans 31–212 (NLARNFSIIA…AIVTKIPPPQ (182 aa)). GTP is bound by residues 40–47 (AHIDHGKS), 105–109 (DTPGH), and 159–162 (NKID).

The protein belongs to the TRAFAC class translation factor GTPase superfamily. Classic translation factor GTPase family. LepA subfamily.

The protein localises to the plastid. It localises to the chloroplast. It catalyses the reaction GTP + H2O = GDP + phosphate + H(+). Functionally, promotes chloroplast protein synthesis. May act as a fidelity factor of the translation reaction, by catalyzing a one-codon backward translocation of tRNAs on improperly translocated ribosomes. This is Translation factor GUF1 homolog, chloroplastic from Oryza sativa subsp. indica (Rice).